Here is a 177-residue protein sequence, read N- to C-terminus: Actinorhodin polyketide dimerase (177 aa).

The protein to S.pristinaespiralis SnaC.

It functions in the pathway antibiotic biosynthesis; actinorhodin biosynthesis. The protein is Actinorhodin polyketide dimerase (actVB) of Streptomyces coelicolor (strain ATCC BAA-471 / A3(2) / M145).